The following is a 336-amino-acid chain: Large ribosomal subunit protein uL1m (336 aa).

Residues 1 to 50 constitute a mitochondrion transit peptide; it reads MAAAVRCLRRVLIHHQRHCLCKMASQASLYPCSVNSLLHNRHFAAAAAAA. Residue S85 is modified to Phosphoserine.

It belongs to the universal ribosomal protein uL1 family.

The protein resides in the mitochondrion. This chain is Large ribosomal subunit protein uL1m (Mrpl1), found in Mus musculus (Mouse).